The primary structure comprises 157 residues: Endoribonuclease YbeY (157 aa).

Zn(2+) is bound by residues H114, H118, and H124.

This sequence belongs to the endoribonuclease YbeY family. Zn(2+) is required as a cofactor.

The protein resides in the cytoplasm. Its function is as follows. Single strand-specific metallo-endoribonuclease involved in late-stage 70S ribosome quality control and in maturation of the 3' terminus of the 16S rRNA. The protein is Endoribonuclease YbeY of Yersinia pseudotuberculosis serotype O:3 (strain YPIII).